Consider the following 910-residue polypeptide: 2-oxoglutarate dehydrogenase E1 component (910 aa).

The protein belongs to the alpha-ketoglutarate dehydrogenase family. In terms of assembly, homodimer. Part of the 2-oxoglutarate dehydrogenase (OGDH) complex composed of E1 (2-oxoglutarate dehydrogenase), E2 (dihydrolipoamide succinyltransferase) and E3 (dihydrolipoamide dehydrogenase); the complex contains multiple copies of the three enzymatic components (E1, E2 and E3). Thiamine diphosphate is required as a cofactor.

The catalysed reaction is N(6)-[(R)-lipoyl]-L-lysyl-[protein] + 2-oxoglutarate + H(+) = N(6)-[(R)-S(8)-succinyldihydrolipoyl]-L-lysyl-[protein] + CO2. Functionally, E1 component of the 2-oxoglutarate dehydrogenase (OGDH) complex which catalyzes the decarboxylation of 2-oxoglutarate, the first step in the conversion of 2-oxoglutarate to succinyl-CoA and CO(2). This chain is 2-oxoglutarate dehydrogenase E1 component, found in Staphylococcus aureus (strain N315).